Consider the following 170-residue polypeptide: Peptide deformylase (170 aa).

Positions 94 and 136 each coordinate Fe cation. Residue Glu137 is part of the active site. His140 lines the Fe cation pocket.

It belongs to the polypeptide deformylase family. It depends on Fe(2+) as a cofactor.

It carries out the reaction N-terminal N-formyl-L-methionyl-[peptide] + H2O = N-terminal L-methionyl-[peptide] + formate. Its function is as follows. Removes the formyl group from the N-terminal Met of newly synthesized proteins. Requires at least a dipeptide for an efficient rate of reaction. N-terminal L-methionine is a prerequisite for activity but the enzyme has broad specificity at other positions. This chain is Peptide deformylase, found in Xylella fastidiosa (strain M12).